The following is a 317-amino-acid chain: Taste receptor type 2 member 7 (317 aa).

Over 1–9 the chain is Extracellular; the sequence is MTDKVQTTL. Residues 10-30 traverse the membrane as a helical segment; it reads LFLAIGEFSVGILGNAFIGLV. Residues 31 to 55 lie on the Cytoplasmic side of the membrane; the sequence is NCMDWVKKRKIASIDLILTSLAISR. Residues 56–76 form a helical membrane-spanning segment; sequence ICLLCVILLDCFMLVLYPDVY. Residues 77–94 lie on the Extracellular side of the membrane; the sequence is ATGKQMRIIDFFWTLTNH. Residues 95–115 form a helical membrane-spanning segment; it reads LSIWFATCLSIYYFFKIANFF. Residues 116-128 lie on the Cytoplasmic side of the membrane; sequence HPLFLWMKWRIDR. The helical transmembrane segment at 129–149 threads the bilayer; the sequence is VISWILLGCMVLSVFINLPAT. The Extracellular portion of the chain corresponds to 150–187; it reads ENLNADFRRCVKAKRKTNLTWSCRVTKAQHASTKLFLN. Asparagine 167 carries an N-linked (GlcNAc...) asparagine glycan. The chain crosses the membrane as a helical span at residues 188-208; the sequence is LVTLLPFSVCLVSFFLLILSL. The Cytoplasmic portion of the chain corresponds to 209-235; the sequence is WRHIRRMQLSATGCRDPSTEAHVRALK. Residues 236 to 256 traverse the membrane as a helical segment; that stretch reads AVISFLFLFIAYYLSFLIATS. The Extracellular portion of the chain corresponds to 257–266; it reads SYFIPETELA. Residues 267-287 traverse the membrane as a helical segment; it reads VIFGEFIALIYPSSHSFILIL. Residues 288 to 317 are Cytoplasmic-facing; sequence GNNKLRRASLKVLWTVMSILKGRKFQQKQI.

This sequence belongs to the G-protein coupled receptor T2R family.

It localises to the membrane. Gustducin-coupled receptor implicated in the perception of bitter compounds in the oral cavity and the gastrointestinal tract. Signals through PLCB2 and the calcium-regulated cation channel TRPM5. The sequence is that of Taste receptor type 2 member 7 (TAS2R7) from Papio hamadryas (Hamadryas baboon).